Here is a 493-residue protein sequence, read N- to C-terminus: Probable NADPH:adrenodoxin oxidoreductase, mitochondrial (493 aa).

The FAD site is built by S26, E48, L56, and I100. NADP(+) contacts are provided by residues N177–V180, R223–R224, and E235. FAD is bound by residues W407 and G414–I416. An NADP(+)-binding site is contributed by G414.

This sequence belongs to the ferredoxin--NADP reductase type 1 family. The cofactor is FAD.

Its subcellular location is the mitochondrion inner membrane. The catalysed reaction is 2 reduced [adrenodoxin] + NADP(+) + H(+) = 2 oxidized [adrenodoxin] + NADPH. Its function is as follows. Adrenodoxin reductase transfers electrons from NADPH to adrenodoxin, which is involved in heme A biosynthesis and in iron-sulfur cluster assembly. Involved in the electron transfer to heme A synthase COX15, a heme protein that catalyzes the conversion of heme O to heme A. Required for the de novo synthesis of Fe-S clusters on iron sulfur cluster assembly protein ISU1. Involved in electron delivery for Fe-S cluster synthesis. Essential for coenzyme Q biosynthesis. May be involved in the electron transfer required for the hydroxylation reaction performed by COQ6. May play a role in cellular and mitochondrial iron homeostasis. This is Probable NADPH:adrenodoxin oxidoreductase, mitochondrial from Saccharomyces cerevisiae (strain ATCC 204508 / S288c) (Baker's yeast).